Reading from the N-terminus, the 286-residue chain is MSIQHFRVALIPFFAAFCLPVFAHPETLVKVKDAEDQLGARVGYIELDLNSGKILESFRPEERFPMMSTFKVLLCGAVLSRVDAGQEQLGRRIHYSQNDLVEYSPVTEKHLTDGMTVRELCSAAITMSDNTAANLLLTTIGGPKELTAFLHNMGDHVTRLDRWEPELNEAIPNDERDTTMPAAMATTLRKLLTGELLTLASRQQLIDWMEADKVAGPLLRSALPAGWFIADKSGAGERGSRGIIAALGPDGKPSRIVVIYTTGSQATMDERNRQIAEIGASLIKHW.

Residues 1–23 form the signal peptide; sequence MSIQHFRVALIPFFAAFCLPVFA. Catalysis depends on Ser68, which acts as the Acyl-ester intermediate. Cys75 and Cys121 form a disulfide bridge. Catalysis depends on Glu166, which acts as the Proton acceptor. 232–234 provides a ligand contact to substrate; that stretch reads KSG.

Belongs to the class-A beta-lactamase family.

The enzyme catalyses a beta-lactam + H2O = a substituted beta-amino acid. Functionally, TEM-type are the most prevalent beta-lactamases in enterobacteria; they hydrolyze the beta-lactam bond in susceptible beta-lactam antibiotics, thus conferring resistance to penicillins and cephalosporins. TEM-3 and TEM-4 are capable of hydrolyzing cefotaxime and ceftazidime. TEM-5 is capable of hydrolyzing ceftazidime. TEM-6 is capable of hydrolyzing ceftazidime and aztreonam. TEM-8/CAZ-2, TEM-16/CAZ-7 and TEM-24/CAZ-6 are markedly active against ceftazidime. IRT-4 shows resistance to beta-lactamase inhibitors. This chain is Beta-lactamase TEM (bla), found in Escherichia coli.